Consider the following 382-residue polypeptide: Myb-like transcription factor (382 aa).

3 Myb-like domains span residues 1 to 57 (MPRS…RWSK), 58 to 108 (ITGA…QHCL), and 109 to 160 (DPSL…ITLF). Positions 194–210 (MSMDASEDGDDAEDDQT) are enriched in acidic residues. The tract at residues 194-240 (MSMDASEDGDDAEDDQTPDSYTSISTSSFDDILGGSSSSPSAADTMT) is disordered. Positions 211-240 (PDSYTSISTSSFDDILGGSSSSPSAADTMT) are enriched in polar residues.

It is found in the nucleus. In terms of biological role, transcription factor; part of the gene cluster that mediates the biosynthesis of 1233A, a natural compound known as an inhibitor of HMG-CoA synthase in the mevalonate pathway and with antibacterial and antifungal activities. Involved in hygromycin B-induced transcriptional control of the cluster. This Fusarium sp protein is Myb-like transcription factor.